Reading from the N-terminus, the 738-residue chain is Probable trehalase (738 aa).

The tract at residues 1-44 (MLQGMPKRSGSISELHDPFSSPDVYYGPATDPRRQKQPNKYSRT) is disordered. Residues Arg289, 296-297 (WD), Asn333, Arg342, 342-344 (RSQ), and Gly463 each bind substrate. Residues Asp465 and Glu660 each act as proton donor/acceptor in the active site.

The protein belongs to the glycosyl hydrolase 37 family.

The enzyme catalyses alpha,alpha-trehalose + H2O = alpha-D-glucose + beta-D-glucose. This is Probable trehalase (NTH2) from Eremothecium gossypii (strain ATCC 10895 / CBS 109.51 / FGSC 9923 / NRRL Y-1056) (Yeast).